We begin with the raw amino-acid sequence, 259 residues long: Putative protein-disulfide oxidoreductase RBE_1288 (259 aa).

Residues 1-20 (MRNSFITLIFLLLLSGCSEE) form the signal peptide. The disordered stretch occupies residues 25–54 (VEQESSESITPAQASTSDENNNQTTETTTP). The segment covering 33–42 (ITPAQASTSD) has biased composition (polar residues). Positions 43 to 54 (ENNNQTTETTTP) are enriched in low complexity. The Thioredoxin domain maps to 47-251 (QTTETTTPAV…ISAAIDKAIE (205 aa)). A disulfide bridge connects residues Cys104 and Cys107.

It belongs to the thioredoxin family. DsbA subfamily.

The protein resides in the periplasm. May be required for disulfide bond formation in some proteins. This Rickettsia bellii (strain RML369-C) protein is Putative protein-disulfide oxidoreductase RBE_1288.